Consider the following 327-residue polypeptide: Serine/threonine-protein phosphatase alpha-1 isoform (327 aa).

Mn(2+) is bound by residues Asp62, His64, Asp90, and Asn122. Residue His123 is the Proton donor of the active site. Positions 171 and 246 each coordinate Mn(2+). The disordered stretch occupies residues 308 to 327 (GSSGRPLTPPRGANNKNKKK). Thr315 carries the phosphothreonine modification.

This sequence belongs to the PPP phosphatase family. PP-1 subfamily. In terms of assembly, interacts with Nop17l. It depends on Mn(2+) as a cofactor.

The catalysed reaction is O-phospho-L-seryl-[protein] + H2O = L-seryl-[protein] + phosphate. The enzyme catalyses O-phospho-L-threonyl-[protein] + H2O = L-threonyl-[protein] + phosphate. The sequence is that of Serine/threonine-protein phosphatase alpha-1 isoform (Pp1alpha-96A) from Drosophila melanogaster (Fruit fly).